Here is a 356-residue protein sequence, read N- to C-terminus: UDP-N-acetylglucosamine--N-acetylmuramyl-(pentapeptide) pyrophosphoryl-undecaprenol N-acetylglucosamine transferase (356 aa).

UDP-N-acetyl-alpha-D-glucosamine-binding positions include 12-14, N124, R163, S188, I242, and Q287; that span reads TGG.

This sequence belongs to the glycosyltransferase 28 family. MurG subfamily.

The protein localises to the cell inner membrane. The enzyme catalyses di-trans,octa-cis-undecaprenyl diphospho-N-acetyl-alpha-D-muramoyl-L-alanyl-D-glutamyl-meso-2,6-diaminopimeloyl-D-alanyl-D-alanine + UDP-N-acetyl-alpha-D-glucosamine = di-trans,octa-cis-undecaprenyl diphospho-[N-acetyl-alpha-D-glucosaminyl-(1-&gt;4)]-N-acetyl-alpha-D-muramoyl-L-alanyl-D-glutamyl-meso-2,6-diaminopimeloyl-D-alanyl-D-alanine + UDP + H(+). It functions in the pathway cell wall biogenesis; peptidoglycan biosynthesis. Its function is as follows. Cell wall formation. Catalyzes the transfer of a GlcNAc subunit on undecaprenyl-pyrophosphoryl-MurNAc-pentapeptide (lipid intermediate I) to form undecaprenyl-pyrophosphoryl-MurNAc-(pentapeptide)GlcNAc (lipid intermediate II). The chain is UDP-N-acetylglucosamine--N-acetylmuramyl-(pentapeptide) pyrophosphoryl-undecaprenol N-acetylglucosamine transferase from Pseudomonas syringae pv. tomato (strain ATCC BAA-871 / DC3000).